A 437-amino-acid chain; its full sequence is Elongation factor Tu, mitochondrial (437 aa).

The transit peptide at 1–38 (MSALLPRLLTRTAFKASGKLLRLSSVISRTFSQTTTSY) directs the protein to the mitochondrion. Residues 46 to 242 (KPHVNIGTIG…AVDEYIPTPE (197 aa)) form the tr-type G domain. The interval 55 to 62 (GHVDHGKT) is G1. A GTP-binding site is contributed by 55 to 62 (GHVDHGKT). Residues 96–100 (GITIS) are G2. The segment at 117 to 120 (DCPG) is G3. GTP is bound by residues 117–121 (DCPGH) and 172–175 (NKVD). Residues 172–175 (NKVD) form a G4 region. A G5 region spans residues 210-212 (SAL).

Belongs to the TRAFAC class translation factor GTPase superfamily. Classic translation factor GTPase family. EF-Tu/EF-1A subfamily. The precursor is processed in two steps involving mitochondrial intermediate peptidase (MIP) and mitochondrial processing peptidase (MPP).

It localises to the mitochondrion. It functions in the pathway protein biosynthesis; polypeptide chain elongation. G-protein that, in its active GTP-bound form, binds to and delivers aminoacyl-tRNA to the A-site of ribosomes during protein biosynthesis. In the presence of a correct codon-anticodon match between the aminoacyl-tRNA and the A-site codon of the ribosome-bound mRNA, the ribosome acts as a GTPase activator and the GTP is hydrolyzed. The inactive GDP-bound form leaves the ribosome and must be recycled before binding another molecule of aminoacyl-tRNA. Required for mitochondrial protein biosynthesis and maintenance of mitochondrial DNA. This chain is Elongation factor Tu, mitochondrial (TUF1), found in Saccharomyces cerevisiae (strain ATCC 204508 / S288c) (Baker's yeast).